The sequence spans 634 residues: Chaperone protein DnaK (634 aa).

T193 is subject to Phosphothreonine; by autocatalysis. The interval 597–634 (GNANNTSSTESTTTNNNNEEDSKVVDSDYQEIDKKDGK) is disordered. A compositionally biased stretch (low complexity) spans 600–613 (NNTSSTESTTTNNN). Positions 616 to 634 (EDSKVVDSDYQEIDKKDGK) are enriched in basic and acidic residues.

It belongs to the heat shock protein 70 family.

In terms of biological role, acts as a chaperone. The polypeptide is Chaperone protein DnaK (Ehrlichia canis (strain Jake)).